The following is a 368-amino-acid chain: Quinolinate synthase (368 aa).

Positions 46 and 63 each coordinate iminosuccinate. C110 serves as a coordination point for [4Fe-4S] cluster. Residues 141–143 (YVN) and S162 contribute to the iminosuccinate site. A [4Fe-4S] cluster-binding site is contributed by C230. Residues 256 to 258 (HPE) and T273 contribute to the iminosuccinate site. C320 is a [4Fe-4S] cluster binding site.

Belongs to the quinolinate synthase family. Type 3 subfamily. [4Fe-4S] cluster is required as a cofactor.

It is found in the cytoplasm. The catalysed reaction is iminosuccinate + dihydroxyacetone phosphate = quinolinate + phosphate + 2 H2O + H(+). The protein operates within cofactor biosynthesis; NAD(+) biosynthesis; quinolinate from iminoaspartate: step 1/1. In terms of biological role, catalyzes the condensation of iminoaspartate with dihydroxyacetone phosphate to form quinolinate. The protein is Quinolinate synthase of Bacillus cereus (strain ATCC 10987 / NRS 248).